Reading from the N-terminus, the 411-residue chain is Peptidase T (411 aa).

His-79 contacts Zn(2+). Asp-81 is an active-site residue. Residue Asp-142 participates in Zn(2+) binding. Glu-176 (proton acceptor) is an active-site residue. Zn(2+) is bound by residues Glu-177, Asp-199, and His-381.

Belongs to the peptidase M20B family. Requires Zn(2+) as cofactor.

The protein localises to the cytoplasm. The enzyme catalyses Release of the N-terminal residue from a tripeptide.. Cleaves the N-terminal amino acid of tripeptides. In Geobacillus thermodenitrificans (strain NG80-2), this protein is Peptidase T.